The sequence spans 184 residues: Ribosome-recycling factor (184 aa).

Belongs to the RRF family.

Its subcellular location is the cytoplasm. Its function is as follows. Responsible for the release of ribosomes from messenger RNA at the termination of protein biosynthesis. May increase the efficiency of translation by recycling ribosomes from one round of translation to another. The chain is Ribosome-recycling factor from Psychrobacter sp. (strain PRwf-1).